The sequence spans 431 residues: Enolase (431 aa).

Gln-163 serves as a coordination point for (2R)-2-phosphoglycerate. Residue Glu-205 is the Proton donor of the active site. Asp-242, Glu-288, and Asp-315 together coordinate Mg(2+). 4 residues coordinate (2R)-2-phosphoglycerate: Lys-340, Arg-369, Ser-370, and Lys-391. Lys-340 functions as the Proton acceptor in the catalytic mechanism.

This sequence belongs to the enolase family. It depends on Mg(2+) as a cofactor.

The protein localises to the cytoplasm. It is found in the secreted. Its subcellular location is the cell surface. It carries out the reaction (2R)-2-phosphoglycerate = phosphoenolpyruvate + H2O. It functions in the pathway carbohydrate degradation; glycolysis; pyruvate from D-glyceraldehyde 3-phosphate: step 4/5. Functionally, catalyzes the reversible conversion of 2-phosphoglycerate (2-PG) into phosphoenolpyruvate (PEP). It is essential for the degradation of carbohydrates via glycolysis. This Latilactobacillus sakei subsp. sakei (strain 23K) (Lactobacillus sakei subsp. sakei) protein is Enolase.